Consider the following 563-residue polypeptide: CTP synthase (563 aa).

The interval 1–280 (MTKFVFVTGG…DEMICMKLQL (280 aa)) is amidoligase domain. CTP is bound at residue serine 13. UTP is bound at residue serine 13. ATP contacts are provided by residues 14 to 19 (SLGKGI) and aspartate 71. Positions 71 and 154 each coordinate Mg(2+). CTP-binding positions include 161-163 (DIE), 201-206 (KTKPTQ), and lysine 237. UTP contacts are provided by residues 201-206 (KTKPTQ) and lysine 237. Residues 305 to 557 (TIAMAGKYTE…IAAALEHHAA (253 aa)) form the Glutamine amidotransferase type-1 domain. Glycine 366 contacts L-glutamine. Cysteine 393 acts as the Nucleophile; for glutamine hydrolysis in catalysis. L-glutamine-binding positions include 394 to 397 (LGMQ), glutamate 417, and arginine 483. Active-site residues include histidine 530 and glutamate 532.

This sequence belongs to the CTP synthase family. As to quaternary structure, homotetramer.

It catalyses the reaction UTP + L-glutamine + ATP + H2O = CTP + L-glutamate + ADP + phosphate + 2 H(+). It carries out the reaction L-glutamine + H2O = L-glutamate + NH4(+). The catalysed reaction is UTP + NH4(+) + ATP = CTP + ADP + phosphate + 2 H(+). Its pathway is pyrimidine metabolism; CTP biosynthesis via de novo pathway; CTP from UDP: step 2/2. With respect to regulation, allosterically activated by GTP, when glutamine is the substrate; GTP has no effect on the reaction when ammonia is the substrate. The allosteric effector GTP functions by stabilizing the protein conformation that binds the tetrahedral intermediate(s) formed during glutamine hydrolysis. Inhibited by the product CTP, via allosteric rather than competitive inhibition. In terms of biological role, catalyzes the ATP-dependent amination of UTP to CTP with either L-glutamine or ammonia as the source of nitrogen. Regulates intracellular CTP levels through interactions with the four ribonucleotide triphosphates. This is CTP synthase from Leptothrix cholodnii (strain ATCC 51168 / LMG 8142 / SP-6) (Leptothrix discophora (strain SP-6)).